The following is a 318-amino-acid chain: Coproporphyrin III ferrochelatase (318 aa).

Residues H186 and E268 each coordinate Fe(2+).

Belongs to the ferrochelatase family.

Its subcellular location is the cytoplasm. It carries out the reaction Fe-coproporphyrin III + 2 H(+) = coproporphyrin III + Fe(2+). It participates in porphyrin-containing compound metabolism; protoheme biosynthesis. Functionally, involved in coproporphyrin-dependent heme b biosynthesis. Catalyzes the insertion of ferrous iron into coproporphyrin III to form Fe-coproporphyrin III. The sequence is that of Coproporphyrin III ferrochelatase from Lactococcus lactis subsp. cremoris (strain SK11).